The following is a 714-amino-acid chain: DNA ligase (714 aa).

Residues 47 to 51 (DAEYD), 96 to 97 (SL), and Glu128 contribute to the NAD(+) site. Lys130 functions as the N6-AMP-lysine intermediate in the catalytic mechanism. Residues Arg151, Glu188, Lys306, and Lys330 each coordinate NAD(+). The Zn(2+) site is built by Cys435, Cys438, Cys453, and Cys459. Residues 637-714 (RRDTAVAGKT…TEDEWLALIS (78 aa)) form the BRCT domain.

It belongs to the NAD-dependent DNA ligase family. LigA subfamily. The cofactor is Mg(2+). Requires Mn(2+) as cofactor.

It catalyses the reaction NAD(+) + (deoxyribonucleotide)n-3'-hydroxyl + 5'-phospho-(deoxyribonucleotide)m = (deoxyribonucleotide)n+m + AMP + beta-nicotinamide D-nucleotide.. Its function is as follows. DNA ligase that catalyzes the formation of phosphodiester linkages between 5'-phosphoryl and 3'-hydroxyl groups in double-stranded DNA using NAD as a coenzyme and as the energy source for the reaction. It is essential for DNA replication and repair of damaged DNA. The polypeptide is DNA ligase (Rhodopseudomonas palustris (strain HaA2)).